Reading from the N-terminus, the 283-residue chain is uncharacterized protein (283 aa).

This is an uncharacterized protein from Acanthamoeba polyphaga mimivirus (APMV).